Here is a 340-residue protein sequence, read N- to C-terminus: Cell growth-regulated gene 1 protein (340 aa).

This sequence belongs to the SMP-30/CGR1 family.

Its function is as follows. Involved in the cell growth regulation. The sequence is that of Cell growth-regulated gene 1 protein (CGR1) from Candida albicans (strain SC5314 / ATCC MYA-2876) (Yeast).